The following is a 256-amino-acid chain: Indole-3-glycerol phosphate synthase (256 aa).

This sequence belongs to the TrpC family.

It carries out the reaction 1-(2-carboxyphenylamino)-1-deoxy-D-ribulose 5-phosphate + H(+) = (1S,2R)-1-C-(indol-3-yl)glycerol 3-phosphate + CO2 + H2O. It functions in the pathway amino-acid biosynthesis; L-tryptophan biosynthesis; L-tryptophan from chorismate: step 4/5. This Pelodictyon phaeoclathratiforme (strain DSM 5477 / BU-1) protein is Indole-3-glycerol phosphate synthase.